The sequence spans 316 residues: Ester hydrolase C11orf54 homolog (316 aa).

H267, H269, and H279 together coordinate Zn(2+).

As to quaternary structure, monomer. Requires Zn(2+) as cofactor.

The protein localises to the nucleus. The protein resides in the cytoplasm. Exhibits ester hydrolase activity on the substrate p-nitrophenyl acetate, in vitro. May regulate DNA damage and repair by regulating HIF1A degradation via chaperone-mediated autophagy (CMA). This chain is Ester hydrolase C11orf54 homolog, found in Xenopus laevis (African clawed frog).